Consider the following 560-residue polypeptide: Glutamine--tRNA ligase (560 aa).

The 'HIGH' region motif lies at 36–46; the sequence is PEPNGFAHIGH. ATP-binding positions include 37–39 and 43–49; these read EPN and HIGHAKA. Residues Asp-69 and Tyr-214 each contribute to the L-glutamine site. 263–264 is a binding site for ATP; the sequence is RL. Residues 270 to 274 carry the 'KMSKS' region motif; that stretch reads LTSKR.

Belongs to the class-I aminoacyl-tRNA synthetase family. As to quaternary structure, monomer.

It is found in the cytoplasm. The enzyme catalyses tRNA(Gln) + L-glutamine + ATP = L-glutaminyl-tRNA(Gln) + AMP + diphosphate. The chain is Glutamine--tRNA ligase from Chromobacterium violaceum (strain ATCC 12472 / DSM 30191 / JCM 1249 / CCUG 213 / NBRC 12614 / NCIMB 9131 / NCTC 9757 / MK).